The primary structure comprises 359 residues: Cysteine/Cysteine sulfinic acid decarboxylase (359 aa).

This sequence in the N-terminal section; belongs to the HFCD (homo-oligomeric flavin containing Cys decarboxylase) superfamily. In the C-terminal section; belongs to the PPC synthetase family.

The catalysed reaction is L-cysteine + H(+) = cysteamine + CO2. The enzyme catalyses 3-sulfino-L-alanine + H(+) = hypotaurine + CO2. Its activity is regulated as follows. Slightly stimulated in the presence of 1 mM Mg(2+). In terms of biological role, catalyzes the decarboxylation of L-cysteine to cysteamine and of 3-sulfino-L-alanine (cysteine sulfinic acid) to hypotaurine. Also catalyzes the decarboxylation of various amino acids such as L-lysine, L-glutamate, L-asparaginate and L-proline. In vitro, shows highest activity with L-cysteine as substrate. The chain is Cysteine/Cysteine sulfinic acid decarboxylase from Unknown prokaryotic organism.